Consider the following 383-residue polypeptide: 2-aminoethylphosphonate--pyruvate transaminase (383 aa).

Lys-192 is subject to N6-(pyridoxal phosphate)lysine.

This sequence belongs to the class-V pyridoxal-phosphate-dependent aminotransferase family. PhnW subfamily. Homodimer. The cofactor is pyridoxal 5'-phosphate.

The catalysed reaction is (2-aminoethyl)phosphonate + pyruvate = phosphonoacetaldehyde + L-alanine. Involved in phosphonate degradation. The sequence is that of 2-aminoethylphosphonate--pyruvate transaminase from Rhizobium meliloti (strain 1021) (Ensifer meliloti).